The chain runs to 420 residues: Glutamyl-tRNA reductase (420 aa).

Substrate is bound by residues 49–52 (TCNR), S107, 112–114 (EPQ), and Q118. Residue C50 is the Nucleophile of the active site. 187 to 192 (GAGETI) is a binding site for NADP(+).

This sequence belongs to the glutamyl-tRNA reductase family. As to quaternary structure, homodimer.

The catalysed reaction is (S)-4-amino-5-oxopentanoate + tRNA(Glu) + NADP(+) = L-glutamyl-tRNA(Glu) + NADPH + H(+). The protein operates within porphyrin-containing compound metabolism; protoporphyrin-IX biosynthesis; 5-aminolevulinate from L-glutamyl-tRNA(Glu): step 1/2. Catalyzes the NADPH-dependent reduction of glutamyl-tRNA(Glu) to glutamate 1-semialdehyde (GSA). In Nitrosococcus oceani (strain ATCC 19707 / BCRC 17464 / JCM 30415 / NCIMB 11848 / C-107), this protein is Glutamyl-tRNA reductase.